The primary structure comprises 481 residues: Argininosuccinate lyase (481 aa).

The protein belongs to the lyase 1 family. Argininosuccinate lyase subfamily.

The protein localises to the cytoplasm. It catalyses the reaction 2-(N(omega)-L-arginino)succinate = fumarate + L-arginine. It functions in the pathway amino-acid biosynthesis; L-arginine biosynthesis; L-arginine from L-ornithine and carbamoyl phosphate: step 3/3. This is Argininosuccinate lyase from Methanococcus maripaludis (strain C5 / ATCC BAA-1333).